Here is a 430-residue protein sequence, read N- to C-terminus: Hemagglutinin-esterase (430 aa).

A signal peptide spans 1 to 27 (MLRMRVRPPSAIPVFLIFVLLPFVLTS). The segment at 16–133 (LIFVLLPFVL…GSFGWVSNKV (118 aa)) is esterase domain first part. Topologically, residues 28-404 (KPITPHYGPG…ENVDVTSSAY (377 aa)) are virion surface. Ser49 (nucleophile) is an active-site residue. Cys53 and Cys69 are oxidised to a cystine. Residues Asn88, Asn117, Asn159, Asn165, Asn247, Asn268, and Asn289 are each glycosylated (N-linked (GlcNAc...) asparagine; by host). Intrachain disulfides connect Cys120/Cys168, Cys207/Cys284, and Cys215/Cys257. The interval 134–274 (GFYSKLYSMA…GVYNATTFGK (141 aa)) is receptor binding. The esterase domain second part stretch occupies residues 275–390 (FLIYPTKSYC…SCPQYYKLFE (116 aa)). A disulfide bridge connects residues Cys315 and Cys320. N-linked (GlcNAc...) asparagine; by host glycosylation is present at Asn324. Catalysis depends on charge relay system residues Asp336 and His339. An N-linked (GlcNAc...) asparagine; by host glycan is attached at Asn354. The cysteines at positions 357 and 382 are disulfide-linked. A helical transmembrane segment spans residues 405–425 (FVATWVLLVLVIILIFILISF). The Intravirion segment spans residues 426–430 (CLSSY).

It belongs to the influenza type C/coronaviruses hemagglutinin-esterase family. Post-translationally, N-glycosylated.

Its subcellular location is the virion membrane. The protein localises to the host cell membrane. It carries out the reaction N-acetyl-9-O-acetylneuraminate + H2O = N-acetylneuraminate + acetate + H(+). The enzyme catalyses N-acetyl-4-O-acetylneuraminate + H2O = N-acetylneuraminate + acetate + H(+). Structural protein that makes short spikes at the surface of the virus. Contains receptor binding and receptor-destroying activities. Mediates de-O-acetylation of N-acetyl-9-O-acetylneuraminic acid, which is probably the receptor determinant recognized by the virus on the surface of erythrocytes and susceptible cells. This receptor-destroying activity is important for virus release as it probably helps preventing self-aggregation and ensures the efficient spread of the progeny virus from cell to cell. May serve as a secondary viral attachment protein for initiating infection, the spike protein being the major one. Seems to be a 'luxury' protein that is not absolutely necessary for virus infection in culture. However, its presence in the virus may alter its pathogenicity. May become a target for both the humoral and the cellular branches of the immune system. In Porcine torovirus (strain P10) (PoTV), this protein is Hemagglutinin-esterase (HE).